Consider the following 416-residue polypeptide: Serine hydroxymethyltransferase (416 aa).

(6S)-5,6,7,8-tetrahydrofolate contacts are provided by residues Leu118 and 122–124 (GHL). Lys226 is modified (N6-(pyridoxal phosphate)lysine). Glu242 is a binding site for (6S)-5,6,7,8-tetrahydrofolate.

The protein belongs to the SHMT family. Homodimer. Pyridoxal 5'-phosphate serves as cofactor.

It localises to the cytoplasm. The enzyme catalyses (6R)-5,10-methylene-5,6,7,8-tetrahydrofolate + glycine + H2O = (6S)-5,6,7,8-tetrahydrofolate + L-serine. The protein operates within one-carbon metabolism; tetrahydrofolate interconversion. It functions in the pathway amino-acid biosynthesis; glycine biosynthesis; glycine from L-serine: step 1/1. Its function is as follows. Catalyzes the reversible interconversion of serine and glycine with tetrahydrofolate (THF) serving as the one-carbon carrier. This reaction serves as the major source of one-carbon groups required for the biosynthesis of purines, thymidylate, methionine, and other important biomolecules. Also exhibits THF-independent aldolase activity toward beta-hydroxyamino acids, producing glycine and aldehydes, via a retro-aldol mechanism. The sequence is that of Serine hydroxymethyltransferase from Helicobacter pylori (strain J99 / ATCC 700824) (Campylobacter pylori J99).